Reading from the N-terminus, the 893-residue chain is Translation initiation factor IF-2 (893 aa).

2 disordered regions span residues 135–169 (KAKAKADAEAKAKAKVLTEKPVQESAEDKAAKAEE) and 201–300 (ENEK…ESMD). Basic and acidic residues predominate over residues 201 to 224 (ENEKRWAEEEKARKEAEKTVDHHV). Over residues 251-265 (PSANAGNNANANAGA) the composition is skewed to low complexity. One can recognise a tr-type G domain in the interval 393-562 (SRAPVVTIMG…LLEAEVLELK (170 aa)). Residues 402 to 409 (GHVDHGKT) form a G1 region. 402–409 (GHVDHGKT) is a GTP binding site. The G2 stretch occupies residues 427 to 431 (GITQH). The interval 448–451 (DTPG) is G3. GTP contacts are provided by residues 448 to 452 (DTPGH) and 502 to 505 (NKMD). Positions 502 to 505 (NKMD) are G4. The interval 538 to 540 (SAK) is G5.

Belongs to the TRAFAC class translation factor GTPase superfamily. Classic translation factor GTPase family. IF-2 subfamily.

It localises to the cytoplasm. Its function is as follows. One of the essential components for the initiation of protein synthesis. Protects formylmethionyl-tRNA from spontaneous hydrolysis and promotes its binding to the 30S ribosomal subunits. Also involved in the hydrolysis of GTP during the formation of the 70S ribosomal complex. This Shewanella halifaxensis (strain HAW-EB4) protein is Translation initiation factor IF-2.